The primary structure comprises 260 residues: MTRYKAIVAYDGSNFFGFQVQTKSGVEVQRTVQGELNKAVNQMAKQPVTPIKVVGASRTDTGVHAFGQVVHFDLPFDINPVGVSKGLNTLLPRDILIKAVTKVSDDFHARFSTHAKRYFYRVSTTAFTDPFKRHYTGHFHWHLDTSRIQEALPDLIGEHDFASFAASGNQTASTVRTITSAQLIEKPDEQELVFVFEGNAFLYNQIRIMVGVLLEIGNGRREIHDIQRLIAVKDREQARFTAPASGLYLDEIDYGENPAN.

The active-site Nucleophile is the Asp-60. Tyr-118 is a substrate binding site.

Belongs to the tRNA pseudouridine synthase TruA family. Homodimer.

The enzyme catalyses uridine(38/39/40) in tRNA = pseudouridine(38/39/40) in tRNA. Functionally, formation of pseudouridine at positions 38, 39 and 40 in the anticodon stem and loop of transfer RNAs. The sequence is that of tRNA pseudouridine synthase A from Leuconostoc citreum (strain KM20).